The following is a 347-amino-acid chain: Cytoplasmic tRNA 2-thiolation protein 1 (347 aa).

Residue serine 200 is modified to Phosphoserine. The interval 315 to 347 is disordered; sequence LAIGKGRRGLDEEGPPREPQPSRPLTSEPVPDF.

Belongs to the TtcA family. CTU1/NCS6/ATPBD3 subfamily. In terms of assembly, component of a complex at least composed of URM1, CTU2/NCS2 and CTU1/ATPBD3. May form a heterodimer with CTU2/NCS2.

It localises to the cytoplasm. The protein operates within tRNA modification; 5-methoxycarbonylmethyl-2-thiouridine-tRNA biosynthesis. Plays a central role in 2-thiolation of mcm(5)S(2)U at tRNA wobble positions of tRNA(Lys), tRNA(Glu) and tRNA(Gln). Directly binds tRNAs and probably acts by catalyzing adenylation of tRNAs, an intermediate required for 2-thiolation. It is unclear whether it acts as a sulfurtransferase that transfers sulfur from thiocarboxylated URM1 onto the uridine of tRNAs at wobble position. The sequence is that of Cytoplasmic tRNA 2-thiolation protein 1 from Bos taurus (Bovine).